The chain runs to 1334 residues: DNA-directed RNA polymerase subunit beta' (1334 aa).

Zn(2+) is bound by residues cysteine 213, cysteine 284, cysteine 291, and cysteine 294. The span at 1299 to 1308 (SSRGSSRFSR) shows a compositional bias: low complexity. A disordered region spans residues 1299 to 1334 (SSRGSSRFSRQPISDRWSEADEEGEEDDFEEDYEEE). Acidic residues predominate over residues 1318-1334 (ADEEGEEDDFEEDYEEE).

This sequence belongs to the RNA polymerase beta' chain family. RpoC2 subfamily. In terms of assembly, in cyanobacteria the RNAP catalytic core is composed of 2 alpha, 1 beta, 1 beta', 1 gamma and 1 omega subunit. When a sigma factor is associated with the core the holoenzyme is formed, which can initiate transcription. It depends on Zn(2+) as a cofactor.

The enzyme catalyses RNA(n) + a ribonucleoside 5'-triphosphate = RNA(n+1) + diphosphate. DNA-dependent RNA polymerase catalyzes the transcription of DNA into RNA using the four ribonucleoside triphosphates as substrates. In Microcystis aeruginosa (strain NIES-843 / IAM M-2473), this protein is DNA-directed RNA polymerase subunit beta'.